The sequence spans 297 residues: Formamidopyrimidine-DNA glycosylase (297 aa).

The Schiff-base intermediate with DNA role is filled by Pro-2. Glu-3 functions as the Proton donor in the catalytic mechanism. Lys-58 serves as the catalytic Proton donor; for beta-elimination activity. DNA is bound by residues His-106, Arg-125, and Arg-168. The segment at 259 to 295 (RVYDREGLACTARGCRGVVRRVVQSGRSTFFCEVCQP) adopts an FPG-type zinc-finger fold. The Proton donor; for delta-elimination activity role is filled by Arg-285.

This sequence belongs to the FPG family. In terms of assembly, monomer. It depends on Zn(2+) as a cofactor.

The catalysed reaction is Hydrolysis of DNA containing ring-opened 7-methylguanine residues, releasing 2,6-diamino-4-hydroxy-5-(N-methyl)formamidopyrimidine.. It carries out the reaction 2'-deoxyribonucleotide-(2'-deoxyribose 5'-phosphate)-2'-deoxyribonucleotide-DNA = a 3'-end 2'-deoxyribonucleotide-(2,3-dehydro-2,3-deoxyribose 5'-phosphate)-DNA + a 5'-end 5'-phospho-2'-deoxyribonucleoside-DNA + H(+). In terms of biological role, involved in base excision repair of DNA damaged by oxidation or by mutagenic agents. Acts as a DNA glycosylase that recognizes and removes damaged bases. Has a preference for oxidized purines, such as 7,8-dihydro-8-oxoguanine (8-oxoG). Has AP (apurinic/apyrimidinic) lyase activity and introduces nicks in the DNA strand. Cleaves the DNA backbone by beta-delta elimination to generate a single-strand break at the site of the removed base with both 3'- and 5'-phosphates. In Methylobacterium nodulans (strain LMG 21967 / CNCM I-2342 / ORS 2060), this protein is Formamidopyrimidine-DNA glycosylase.